The sequence spans 93 residues: Pyrimidine/purine nucleoside phosphorylase (93 aa).

It belongs to the nucleoside phosphorylase PpnP family.

It carries out the reaction a purine D-ribonucleoside + phosphate = a purine nucleobase + alpha-D-ribose 1-phosphate. The enzyme catalyses adenosine + phosphate = alpha-D-ribose 1-phosphate + adenine. It catalyses the reaction cytidine + phosphate = cytosine + alpha-D-ribose 1-phosphate. The catalysed reaction is guanosine + phosphate = alpha-D-ribose 1-phosphate + guanine. It carries out the reaction inosine + phosphate = alpha-D-ribose 1-phosphate + hypoxanthine. The enzyme catalyses thymidine + phosphate = 2-deoxy-alpha-D-ribose 1-phosphate + thymine. It catalyses the reaction uridine + phosphate = alpha-D-ribose 1-phosphate + uracil. The catalysed reaction is xanthosine + phosphate = alpha-D-ribose 1-phosphate + xanthine. In terms of biological role, catalyzes the phosphorolysis of diverse nucleosides, yielding D-ribose 1-phosphate and the respective free bases. Can use uridine, adenosine, guanosine, cytidine, thymidine, inosine and xanthosine as substrates. Also catalyzes the reverse reactions. This chain is Pyrimidine/purine nucleoside phosphorylase, found in Marinobacter nauticus (strain ATCC 700491 / DSM 11845 / VT8) (Marinobacter aquaeolei).